Consider the following 840-residue polypeptide: N-acetyltransferase ESCO1 (840 aa).

Positions 1 to 25 (MMSIQEKSKENSSKVTKKSDDKNSE) are enriched in basic and acidic residues. The segment at 1–188 (MMSIQEKSKE…VLEVKSDSKE (188 aa)) is disordered. 3 stretches are compositionally biased toward polar residues: residues 46–58 (KSQA…SKIN), 65–74 (RMSTRSSKAA), and 81–96 (KSIN…YSQE). A compositionally biased stretch (basic and acidic residues) spans 131–140 (VSRRSLRSRE). A compositionally biased stretch (polar residues) spans 141–153 (IQGQVQAVKQSLP). The segment covering 161–170 (SSTQSKSNKT) has biased composition (low complexity). A compositionally biased stretch (basic and acidic residues) spans 178–188 (KVLEVKSDSKE). A Phosphoserine modification is found at Ser200. Disordered stretches follow at residues 221 to 300 (TQGS…KSKR) and 318 to 338 (NVEV…KPTE). Residues 267 to 278 (HTQVNTNTTLPK) are compositionally biased toward polar residues. The segment covering 319-338 (VEVKKESSQMESVKEEKPTE) has biased composition (basic and acidic residues). Lys332 is covalently cross-linked (Glycyl lysine isopeptide (Lys-Gly) (interchain with G-Cter in SUMO2)). Ser412 carries the post-translational modification Phosphoserine. 2 disordered regions span residues 486 to 505 (ANEI…HSFD) and 542 to 582 (TGEN…KCNS). A compositionally biased stretch (polar residues) spans 551–565 (APQQHSILSNQTSKS). Residues 617–641 (VSCNVCGMLYTASNPEDETQHLLFH) form a CCHH-type zinc finger. Acetyl-CoA is bound by residues 772 to 774 (IWV), 780 to 785 (RKKIAS), and 812 to 814 (TPD).

It belongs to the acetyltransferase family. ECO subfamily. In terms of assembly, the subunit structure is controversial. Monomer. Homodimer. In terms of processing, phosphorylated during mitosis, when associated with chromosomes. As to expression, widely expressed. Expressed in heart, brain, liver, placenta, lung, kidney and pancreas. Highly expressed in muscle.

It is found in the nucleus. It localises to the chromosome. It catalyses the reaction L-lysyl-[protein] + acetyl-CoA = N(6)-acetyl-L-lysyl-[protein] + CoA + H(+). In terms of biological role, acetyltransferase required for the establishment of sister chromatid cohesion. Couples the processes of cohesion and DNA replication to ensure that only sister chromatids become paired together. In contrast to the structural cohesins, the deposition and establishment factors are required only during S phase. Acts by mediating the acetylation of cohesin component SMC3. This Homo sapiens (Human) protein is N-acetyltransferase ESCO1 (ESCO1).